A 109-amino-acid chain; its full sequence is Spermidine export protein MdtI (109 aa).

The next 4 helical transmembrane spans lie at 6-26 (WVHA…NVFL), 36-56 (IFGL…SQAV), 64-84 (AYAL…WILF), and 88-108 (LNRK…MVKL).

Belongs to the drug/metabolite transporter (DMT) superfamily. Small multidrug resistance (SMR) (TC 2.A.7.1) family. MdtI subfamily. Forms a complex with MdtJ.

The protein resides in the cell inner membrane. Functionally, catalyzes the excretion of spermidine. This is Spermidine export protein MdtI from Escherichia coli O139:H28 (strain E24377A / ETEC).